Here is a 735-residue protein sequence, read N- to C-terminus: Rho GTPase-activating protein SYDE1 (735 aa).

The segment at 1–253 (MAEPLLRKTF…SPTSFRPYEV (253 aa)) is disordered. Basic and acidic residues predominate over residues 14-31 (RGREKLPRKKSDAKERGH). The span at 35–46 (RPEPSPPEPEPQ) shows a compositional bias: pro residues. A compositionally biased stretch (low complexity) spans 47-71 (APEGSQAGAEGPSSPEASRSPARGA). Positions 122–131 (PPAPEPPGPQ) are enriched in pro residues. The segment covering 211–221 (GGPGPAAGPGG) has biased composition (gly residues). Phosphoserine occurs at positions 224, 231, 235, and 244. One can recognise a C2 domain in the interval 249–366 (RPYEVGPAAR…FRGCQAQQLA (118 aa)). One can recognise a Rho-GAP domain in the interval 398–604 (LPLPLLVERE…YLLQSWPDPR (207 aa)). The residue at position 575 (Ser575) is a Phosphoserine. Disordered stretches follow at residues 608 to 651 (QSPD…SNRY) and 674 to 696 (DYDH…PRVT). Residues Ser681 and Ser683 each carry the phosphoserine modification.

In terms of processing, palmitoylated. Probably palmitoylated by ZDHHC3 and ZDHHC7. Expressed in trophoblast cells of placental villi.

GTPase activator for the Rho-type GTPases. As a GCM1 downstream effector, it is involved in placental development and positively regulates trophoblast cells migration. It regulates cytoskeletal remodeling by controlling the activity of Rho GTPases including RHOA, CDC42 and RAC1. The chain is Rho GTPase-activating protein SYDE1 (SYDE1) from Homo sapiens (Human).